A 481-amino-acid chain; its full sequence is UDP-N-acetylmuramoyl-L-alanyl-D-glutamate--L-lysine ligase (481 aa).

Serine 42 is a UDP-N-acetyl-alpha-D-muramoyl-L-alanyl-D-glutamate binding site. 118 to 124 lines the ATP pocket; the sequence is GTKGKTT. UDP-N-acetyl-alpha-D-muramoyl-L-alanyl-D-glutamate-binding positions include glutamine 158, 160-161, serine 187, and arginine 195; that span reads TT. The residue at position 229 (lysine 229) is an N6-carboxylysine. Residues 404–407 carry the L-lysine recognition motif motif; it reads DDPN.

It belongs to the MurCDEF family. MurE subfamily. Post-translationally, carboxylation is probably crucial for Mg(2+) binding and, consequently, for the gamma-phosphate positioning of ATP.

It is found in the cytoplasm. It catalyses the reaction UDP-N-acetyl-alpha-D-muramoyl-L-alanyl-D-glutamate + L-lysine + ATP = UDP-N-acetyl-alpha-D-muramoyl-L-alanyl-gamma-D-glutamyl-L-lysine + ADP + phosphate + H(+). Its pathway is cell wall biogenesis; peptidoglycan biosynthesis. Functionally, catalyzes the addition of L-lysine to the nucleotide precursor UDP-N-acetylmuramoyl-L-alanyl-D-glutamate (UMAG) in the biosynthesis of bacterial cell-wall peptidoglycan. This Streptococcus pyogenes serotype M28 (strain MGAS6180) protein is UDP-N-acetylmuramoyl-L-alanyl-D-glutamate--L-lysine ligase.